We begin with the raw amino-acid sequence, 122 residues long: Modulator protein MzrA (122 aa).

Topologically, residues 1–10 (MKILTRIPRR) are cytoplasmic. A helical transmembrane segment spans residues 11 to 31 (LLPWLLGGALALVAVSFAPAL). The Periplasmic segment spans residues 32–122 (LSHETVVQIR…NQDANRSIYS (91 aa)).

Belongs to the MzrA family. As to quaternary structure, interacts with EnvZ.

It localises to the cell inner membrane. In terms of biological role, modulates the activity of the EnvZ/OmpR two-component regulatory system, probably by directly modulating EnvZ enzymatic activity and increasing stability of phosphorylated OmpR. The chain is Modulator protein MzrA from Pantoea sp. (strain At-9b).